We begin with the raw amino-acid sequence, 187 residues long: Hypoxanthine/guanine phosphoribosyltransferase (187 aa).

Belongs to the purine/pyrimidine phosphoribosyltransferase family. Archaeal HPRT subfamily. As to quaternary structure, homodimer.

The protein resides in the cytoplasm. It catalyses the reaction IMP + diphosphate = hypoxanthine + 5-phospho-alpha-D-ribose 1-diphosphate. The enzyme catalyses GMP + diphosphate = guanine + 5-phospho-alpha-D-ribose 1-diphosphate. The protein operates within purine metabolism; IMP biosynthesis via salvage pathway; IMP from hypoxanthine: step 1/1. Functionally, catalyzes a salvage reaction resulting in the formation of IMP that is energically less costly than de novo synthesis. This chain is Hypoxanthine/guanine phosphoribosyltransferase, found in Methanopyrus kandleri (strain AV19 / DSM 6324 / JCM 9639 / NBRC 100938).